The sequence spans 134 residues: MKKTPLLNIALSRVIASLGHGDILVIGDAGLPVPPGVELIDLALTQGIPDFISALRIVLSEMQVESHVLAEEILLKQPPALNELNTLSDEAALGERRLVSHEAFKQLSRKARAVVRTGECQPYCNIALVSGVTF.

The Proton donor role is filled by H20. Substrate is bound by residues D28, H101, and 123–125 (YCN).

This sequence belongs to the RbsD / FucU family. RbsD subfamily. Homodecamer.

The protein resides in the cytoplasm. It carries out the reaction beta-D-ribopyranose = beta-D-ribofuranose. It participates in carbohydrate metabolism; D-ribose degradation; D-ribose 5-phosphate from beta-D-ribopyranose: step 1/2. Its function is as follows. Catalyzes the interconversion of beta-pyran and beta-furan forms of D-ribose. The protein is D-ribose pyranase of Pseudomonas fluorescens (strain SBW25).